Here is a 305-residue protein sequence, read N- to C-terminus: Catechol 1,2-dioxygenase (305 aa).

Fe cation-binding residues include Tyr163, Tyr197, His221, and His223.

The protein belongs to the intradiol ring-cleavage dioxygenase family. As to quaternary structure, homodimer. Fe(3+) is required as a cofactor.

It catalyses the reaction catechol + O2 = cis,cis-muconate + 2 H(+). The protein operates within aromatic compound metabolism; beta-ketoadipate pathway; 5-oxo-4,5-dihydro-2-furylacetate from catechol: step 1/3. This is Catechol 1,2-dioxygenase (catA) from Acinetobacter guillouiae (Acinetobacter genomosp. 11).